Here is a 133-residue protein sequence, read N- to C-terminus: Salivary cystatin-L (133 aa).

Positions 1 to 19 (MTSSFALVLLLGGVAVCVA) are cleaved as a signal peptide. The Cystatin domain maps to 30–117 (ANHQANPEFL…HRTCTTVVFE (88 aa)). Cystine bridges form between cysteine 89–cysteine 100 and cysteine 111–cysteine 130.

Belongs to the cystatin family. In terms of assembly, monomer. Can form homodimers in vitro, but probably not in vivo. Homodimers are predicted to be inactive; dimerization disrupts the interaction with target proteases.

It localises to the secreted. Functionally, inhibitor of cysteine proteinases. Inhibits host immune responses via its inhibition of host cathepsins. Contributes to the suppression of the host's immune response to tick salivary proteins and is important for successful feeding on hosts. Inhibits differentiation of host dendritic cells. Inhibits proliferation of host T-cells in response to antigen stimulus. Down-regulates TLR2-mediated host responses to infection by B.burgdorferi and the production of the chemokine CCL3 by host dendritic cells. Down-regulates host responses to infection by B.burgdorferi and the production of IFNB1 by host dendritic cells. Down-regulates IL1B production by host mast cells, and this then leads to impaired activation of IL1R1, resulting in decreased IL9 production. Inhibits host inflammatory reactions and recruitment of host neutrophils. Inhibits papain and cathepsin L (CTSL) (in vitro). Inhibits cathepsin S (CTSS) (in vitro). Inhibits CTSV and CTSC, but to a lesser degree (in vitro). The polypeptide is Salivary cystatin-L (Ixodes scapularis (Black-legged tick)).